The primary structure comprises 69 residues: Large ribosomal subunit protein eL38 (69 aa).

The protein belongs to the eukaryotic ribosomal protein eL38 family.

The protein is Large ribosomal subunit protein eL38 (RPL38) of Solanum lycopersicum (Tomato).